Reading from the N-terminus, the 680-residue chain is Cytosolic endo-beta-N-acetylglucosaminidase 1 (680 aa).

Positions 1–15 are enriched in pro residues; sequence MSVAPPAPSPPPFDP. The tract at residues 1-21 is disordered; the sequence is MSVAPPAPSPPPFDPTKPSTP.

It belongs to the glycosyl hydrolase 85 family.

It localises to the cytoplasm. It is found in the cytosol. The catalysed reaction is an N(4)-(oligosaccharide-(1-&gt;3)-[oligosaccharide-(1-&gt;6)]-beta-D-Man-(1-&gt;4)-beta-D-GlcNAc-(1-&gt;4)-alpha-D-GlcNAc)-L-asparaginyl-[protein] + H2O = an oligosaccharide-(1-&gt;3)-[oligosaccharide-(1-&gt;6)]-beta-D-Man-(1-&gt;4)-D-GlcNAc + N(4)-(N-acetyl-beta-D-glucosaminyl)-L-asparaginyl-[protein]. Functionally, endoglycosidase that releases N-glycans from glycoproteins by cleaving the beta-1,4-glycosidic bond in the N,N'-diacetylchitobiose core. Involved in the production of high-mannose type N-glycans during plant development and fruit maturation. The sequence is that of Cytosolic endo-beta-N-acetylglucosaminidase 1 from Arabidopsis thaliana (Mouse-ear cress).